The primary structure comprises 1368 residues: DNA-directed RNA polymerase subunit beta (1368 aa).

The protein belongs to the RNA polymerase beta chain family. In terms of assembly, the RNAP catalytic core consists of 2 alpha, 1 beta, 1 beta' and 1 omega subunit. When a sigma factor is associated with the core the holoenzyme is formed, which can initiate transcription.

It carries out the reaction RNA(n) + a ribonucleoside 5'-triphosphate = RNA(n+1) + diphosphate. Functionally, DNA-dependent RNA polymerase catalyzes the transcription of DNA into RNA using the four ribonucleoside triphosphates as substrates. The polypeptide is DNA-directed RNA polymerase subunit beta (Legionella pneumophila (strain Paris)).